Reading from the N-terminus, the 132-residue chain is Agouti-signaling protein (132 aa).

The first 22 residues, 1-22, serve as a signal peptide directing secretion; it reads MDVTRLLLATLLVFLCFFTAYS. N-linked (GlcNAc...) asparagine glycosylation occurs at asparagine 39. The tract at residues 62-88 is disordered; the sequence is ISRKEAEKKRSSKKEASMKKVARPRTP. Residues 63 to 79 show a composition bias toward basic and acidic residues; it reads SRKEAEKKRSSKKEASM. Disulfide bonds link cysteine 93/cysteine 108, cysteine 100/cysteine 114, cysteine 107/cysteine 125, cysteine 111/cysteine 132, and cysteine 116/cysteine 123. Residues 93–132 enclose the Agouti domain; sequence CVATRDSCKPPAPACCDPCASCQCRFFRSACSCRVLSLNC.

Its subcellular location is the secreted. Its function is as follows. Involved in the regulation of melanogenesis. The binding of ASP to MC1R precludes alpha-MSH initiated signaling and thus blocks production of cAMP, leading to a down-regulation of eumelanogenesis (brown/black pigment) and thus increasing synthesis of pheomelanin (yellow/red pigment). This is Agouti-signaling protein (ASIP) from Chlorocebus aethiops (Green monkey).